The sequence spans 117 residues: Probable non-functional immunoglobulinn kappa variable 1-37 (117 aa).

An N-terminal signal peptide occupies residues M1–C22. One can recognise an Ig-like domain in the interval I24–P117.

As to quaternary structure, most probably, the immunoglobulin is not assembled due to incorrect folding of light chain. Immunoglobulins are composed of two identical heavy chains and two identical light chains; disulfide-linked.

The protein resides in the secreted. It localises to the cell membrane. Its function is as follows. Probable non-functional open reading frame (ORF) of V region of the variable domain of immunoglobulin light chains. Non-functional ORF generally cannot participate in the synthesis of a productive immunoglobulin chain due to altered V-(D)-J or switch recombination and/or splicing site (at mRNA level) and/or conserved amino acid change (protein level). Immunoglobulins, also known as antibodies, are membrane-bound or secreted glycoproteins produced by B lymphocytes. In the recognition phase of humoral immunity, the membrane-bound immunoglobulins serve as receptors which, upon binding of a specific antigen, trigger the clonal expansion and differentiation of B lymphocytes into immunoglobulins-secreting plasma cells. Secreted immunoglobulins mediate the effector phase of humoral immunity, which results in the elimination of bound antigens. The antigen binding site is formed by the variable domain of one heavy chain, together with that of its associated light chain. Thus, each immunoglobulin has two antigen binding sites with remarkable affinity for a particular antigen. The variable domains are assembled by a process called V-(D)-J rearrangement and can then be subjected to somatic hypermutations which, after exposure to antigen and selection, allow affinity maturation for a particular antigen. This chain is Probable non-functional immunoglobulinn kappa variable 1-37, found in Homo sapiens (Human).